We begin with the raw amino-acid sequence, 373 residues long: UDP-N-acetylenolpyruvoylglucosamine reductase (373 aa).

One can recognise an FAD-binding PCMH-type domain in the interval 30-203; sequence LACMADSVVT…SRVGFRLHTD (174 aa). R180 is a catalytic residue. S258 serves as the catalytic Proton donor. The active site involves E356.

Belongs to the MurB family. FAD is required as a cofactor.

It is found in the cytoplasm. It catalyses the reaction UDP-N-acetyl-alpha-D-muramate + NADP(+) = UDP-N-acetyl-3-O-(1-carboxyvinyl)-alpha-D-glucosamine + NADPH + H(+). It participates in cell wall biogenesis; peptidoglycan biosynthesis. Its function is as follows. Cell wall formation. This chain is UDP-N-acetylenolpyruvoylglucosamine reductase, found in Psychrobacter cryohalolentis (strain ATCC BAA-1226 / DSM 17306 / VKM B-2378 / K5).